A 453-amino-acid chain; its full sequence is UPF0210 protein MM_0081 (453 aa).

Belongs to the UPF0210 family.

This Methanosarcina mazei (strain ATCC BAA-159 / DSM 3647 / Goe1 / Go1 / JCM 11833 / OCM 88) (Methanosarcina frisia) protein is UPF0210 protein MM_0081.